Here is a 477-residue protein sequence, read N- to C-terminus: Glycogen synthase 1 (477 aa).

Residue Lys-15 coordinates ADP-alpha-D-glucose.

Belongs to the glycosyltransferase 1 family. Bacterial/plant glycogen synthase subfamily.

It carries out the reaction [(1-&gt;4)-alpha-D-glucosyl](n) + ADP-alpha-D-glucose = [(1-&gt;4)-alpha-D-glucosyl](n+1) + ADP + H(+). It participates in glycan biosynthesis; glycogen biosynthesis. Its function is as follows. Synthesizes alpha-1,4-glucan chains using ADP-glucose. In Synechocystis sp. (strain ATCC 27184 / PCC 6803 / Kazusa), this protein is Glycogen synthase 1 (glgA1).